Consider the following 159-residue polypeptide: 6,7-dimethyl-8-ribityllumazine synthase (159 aa).

5-amino-6-(D-ribitylamino)uracil contacts are provided by residues Trp26, 57–59 (ALE), and 79–81 (CVV). 84–85 (GT) provides a ligand contact to (2S)-2-hydroxy-3-oxobutyl phosphate. Residue His87 is the Proton donor of the active site. Asn112 is a binding site for 5-amino-6-(D-ribitylamino)uracil. A (2S)-2-hydroxy-3-oxobutyl phosphate-binding site is contributed by Arg126.

It belongs to the DMRL synthase family.

The catalysed reaction is (2S)-2-hydroxy-3-oxobutyl phosphate + 5-amino-6-(D-ribitylamino)uracil = 6,7-dimethyl-8-(1-D-ribityl)lumazine + phosphate + 2 H2O + H(+). Its pathway is cofactor biosynthesis; riboflavin biosynthesis; riboflavin from 2-hydroxy-3-oxobutyl phosphate and 5-amino-6-(D-ribitylamino)uracil: step 1/2. Catalyzes the formation of 6,7-dimethyl-8-ribityllumazine by condensation of 5-amino-6-(D-ribitylamino)uracil with 3,4-dihydroxy-2-butanone 4-phosphate. This is the penultimate step in the biosynthesis of riboflavin. This is 6,7-dimethyl-8-ribityllumazine synthase from Corynebacterium glutamicum (strain ATCC 13032 / DSM 20300 / JCM 1318 / BCRC 11384 / CCUG 27702 / LMG 3730 / NBRC 12168 / NCIMB 10025 / NRRL B-2784 / 534).